The sequence spans 570 residues: Alpha-glucosidase (570 aa).

The active-site Nucleophile is the D206. The active-site Proton donor is the E263.

Belongs to the glycosyl hydrolase 13 family.

The enzyme catalyses Hydrolysis of terminal, non-reducing (1-&gt;4)-linked alpha-D-glucose residues with release of alpha-D-glucose.. This Candida albicans (Yeast) protein is Alpha-glucosidase (MAL2).